Reading from the N-terminus, the 132-residue chain is Interleukin-5 (132 aa).

Residues 1-19 (MRMLLCLNVLTLSCVWAIA) form the signal peptide. Asn-45, Asn-74, and Asn-88 each carry an N-linked (GlcNAc...) asparagine glycan.

The protein belongs to the IL-5 family. In terms of assembly, homodimer; disulfide-linked. Interacts with IL5RA. Interacts with CSF2RB.

It is found in the secreted. In terms of biological role, homodimeric cytokine expressed predominantly by T-lymphocytes and NK cells that plays an important role in the survival, differentiation, and chemotaxis of eosinophils. Acts also on activated and resting B-cells to induce immunoglobulin production, growth, and differentiation. Mechanistically, exerts its biological effects through a receptor composed of IL5RA subunit and the cytokine receptor common subunit beta/CSF2RB. Binding to the receptor leads to activation of various kinases including LYN, SYK and JAK2 and thereby propagates signals through the RAS-MAPK and JAK-STAT5 pathways respectively. The sequence is that of Interleukin-5 (Il5) from Rattus norvegicus (Rat).